The sequence spans 457 residues: Exodeoxyribonuclease 7 large subunit (457 aa).

Belongs to the XseA family. In terms of assembly, heterooligomer composed of large and small subunits.

The protein resides in the cytoplasm. It catalyses the reaction Exonucleolytic cleavage in either 5'- to 3'- or 3'- to 5'-direction to yield nucleoside 5'-phosphates.. In terms of biological role, bidirectionally degrades single-stranded DNA into large acid-insoluble oligonucleotides, which are then degraded further into small acid-soluble oligonucleotides. The protein is Exodeoxyribonuclease 7 large subunit of Enterobacter sp. (strain 638).